Here is a 911-residue protein sequence, read N- to C-terminus: MAASQTSQTVASHVPFADLCSTLERIQKSKGRAEKIRHFREFLDSWRKFHDALHKNHKDVTDSFYPAMRLILPQLERERMAYGIKETMLAKLYIELLNLPRDGKDALKLLNYRTPTGTHGDAGDFAMIAYFVLKPRCLQKGSLTIQQVNDLLDSIASNNSAKRKDLIKKSLLQLITQSSALEQKWLIRMIIKDLKLGVSQQTIFSVFHNDAAELHNVTTDLEKVCRQLHDPSVGLSDISITLFSAFKPMLAAIADIEHIEKDMKHQSFYIETKLDGERMQMHKDGDVYKYFSRNGYNYTDQFGASPTEGSLTPFIHNAFKADIQICILDGEMMAYNPNTQTFMQKGTKFDIKRMVEDSDLQTCYCVFDVLMVNNKKLGHETLRKRYEILSSIFTPIPGRIEIVQKTQAHTKNEVIDALNEAIDKREEGIMVKQPLSIYKPDKRGEGWLKIKPEYVSGLMDELDILIVGGYWGKGSRGGMMSHFLCAVAEKPPPGEKPSVFHTLSRVGSGCTMKELYDLGLKLAKYWKPFHRKAPPSSILCGTEKPEVYIEPCNSVIVQIKAAEIVPSDMYKTGCTLRFPRIEKIRDDKEWHECMTLDDLEQLRGKASGKLASKHLYIGGDDEPQEKKRKAAPKMKKVIGIIEHLKAPNLTNVNKISNIFEDVEFCVMSGTDSQPKPDLENRIAEFGGYIVQNPGPDTYCVIAGSENIRVKNIILSNKHDVVKPAWLLECFKTKSFVPWQPRFMIHMCPSTKEHFAREYDCYGDSYFIDTDLNQLKEVFSGIKNSNEQTPEEMASLIADLEYRYSWDCSPLSMFRRHTVYLDSYAVINDLSTKNEGTRLAIKALELRFHGAKVVSCLAEGVSHVIIGEDHSRVADFKAFRRTFKRKFKILKESWVTDSIDKCELQEENQYLI.

ATP is bound by residues Glu-271, Thr-272, Lys-273, Leu-274, Arg-278, Glu-331, Lys-345, Phe-367, Glu-427, Lys-432, Lys-449, and Lys-451. Lys-273 (N6-AMP-lysine intermediate) is an active-site residue. Glu-331 contributes to the Mg(2+) binding site. Glu-427 is a Mg(2+) binding site. Positions 610 to 620 (LASKHLYIGGD) are required for catalytic activity. BRCT domains follow at residues 654-743 (KISN…PRFM) and 808-911 (SPLS…QYLI).

The protein belongs to the ATP-dependent DNA ligase family. As to quaternary structure, interacts with XRCC4; the LIG4-XRCC4 subcomplex has a 1:2 stoichiometry and XRCC4 is required for LIG4 stability. Component of the core long-range non-homologous end joining (NHEJ) complex (also named DNA-PK complex) composed of PRKDC, LIG4, XRCC4, XRCC6/Ku70, XRCC5/Ku86 and NHEJ1/XLF. Additional component of the NHEJ complex includes PAXX. Following autophosphorylation, PRKDC dissociates from DNA, leading to formation of the short-range NHEJ complex, composed of LIG4, XRCC4, XRCC6/Ku70, XRCC5/Ku86 and NHEJ1/XLF. Interacts with DCLRE1C; the interaction is direct. Interacts with APLF. Mg(2+) serves as cofactor. In terms of tissue distribution, testis, thymus, prostate and heart.

It localises to the nucleus. It carries out the reaction ATP + (deoxyribonucleotide)n-3'-hydroxyl + 5'-phospho-(deoxyribonucleotide)m = (deoxyribonucleotide)n+m + AMP + diphosphate.. DNA ligase involved in DNA non-homologous end joining (NHEJ); required for double-strand break (DSB) repair and V(D)J recombination. Catalyzes the NHEJ ligation step of the broken DNA during DSB repair by resealing the DNA breaks after the gap filling is completed. Joins single-strand breaks in a double-stranded polydeoxynucleotide in an ATP-dependent reaction. LIG4 is mechanistically flexible: it can ligate nicks as well as compatible DNA overhangs alone, while in the presence of XRCC4, it can ligate ends with 2-nucleotides (nt) microhomology and 1-nt gaps. Forms a subcomplex with XRCC4; the LIG4-XRCC4 subcomplex is responsible for the NHEJ ligation step and XRCC4 enhances the joining activity of LIG4. Binding of the LIG4-XRCC4 complex to DNA ends is dependent on the assembly of the DNA-dependent protein kinase complex DNA-PK to these DNA ends. LIG4 regulates nuclear localization of XRCC4. The protein is DNA ligase 4 of Homo sapiens (Human).